A 280-amino-acid polypeptide reads, in one-letter code: Eukaryotic translation initiation factor 3 subunit F-1 (280 aa).

The region spanning 8–138 (VRVHPVVLFQ…LRAYVCIQLG (131 aa)) is the MPN domain.

Belongs to the eIF-3 subunit F family. As to quaternary structure, component of the eukaryotic translation initiation factor 3 (eIF-3) complex. The eIF-3 complex interacts with pix.

It is found in the cytoplasm. Component of the eukaryotic translation initiation factor 3 (eIF-3) complex, which is involved in protein synthesis of a specialized repertoire of mRNAs and, together with other initiation factors, stimulates binding of mRNA and methionyl-tRNAi to the 40S ribosome. The eIF-3 complex specifically targets and initiates translation of a subset of mRNAs involved in cell proliferation. This chain is Eukaryotic translation initiation factor 3 subunit F-1, found in Drosophila yakuba (Fruit fly).